Consider the following 140-residue polypeptide: Large ribosomal subunit protein uL16 (140 aa).

Belongs to the universal ribosomal protein uL16 family. As to quaternary structure, part of the 50S ribosomal subunit.

Functionally, binds 23S rRNA and is also seen to make contacts with the A and possibly P site tRNAs. This Citrifermentans bemidjiense (strain ATCC BAA-1014 / DSM 16622 / JCM 12645 / Bem) (Geobacter bemidjiensis) protein is Large ribosomal subunit protein uL16.